A 95-amino-acid polypeptide reads, in one-letter code: Large ribosomal subunit protein bL27 (95 aa).

The segment at 1 to 25 (MAHKKGTGSTRNGRDSNAQRLGVKR) is disordered. Positions 7-19 (TGSTRNGRDSNAQ) are enriched in polar residues.

It belongs to the bacterial ribosomal protein bL27 family.

The polypeptide is Large ribosomal subunit protein bL27 (Gloeobacter violaceus (strain ATCC 29082 / PCC 7421)).